Consider the following 100-residue polypeptide: MVPTSYYILLSALLFTLGVAGVLIRRNALVLFMSVELMLNSANLALVTFAMARQDIAGQIVVFFVIVVAAAEVAVGLALLVAIFRTKQTTDVDEIHSLKG.

3 helical membrane passes run 4 to 24 (TSYYILLSALLFTLGVAGVLI), 29 to 49 (LVLFMSVELMLNSANLALVTF), and 60 to 80 (IVVFFVIVVAAAEVAVGLALL).

It belongs to the complex I subunit 4L family. As to quaternary structure, NDH-1 is composed of 14 different subunits. Subunits NuoA, H, J, K, L, M, N constitute the membrane sector of the complex.

The protein resides in the cell membrane. The enzyme catalyses a quinone + NADH + 5 H(+)(in) = a quinol + NAD(+) + 4 H(+)(out). Its function is as follows. NDH-1 shuttles electrons from NADH, via FMN and iron-sulfur (Fe-S) centers, to quinones in the respiratory chain. The immediate electron acceptor for the enzyme in this species is believed to be ubiquinone. Couples the redox reaction to proton translocation (for every two electrons transferred, four hydrogen ions are translocated across the cytoplasmic membrane), and thus conserves the redox energy in a proton gradient. This chain is NADH-quinone oxidoreductase subunit K, found in Roseiflexus sp. (strain RS-1).